The sequence spans 427 residues: MLDIQLLRKDAALVAERLAARGFAFDAARFDALEAERKTIQTRTQDAQSRRNTLSKQIGMLKGKGEDTTAVMAEVGGLGDELKQLETRLSELQAELNDFLMGIPNLPHESVAPGKDETANVEVSRWGTPRQFDFAVRDHVDLGEGLGQLDFAAAVKITGSRFSVMRGGLARLHRALAQFMLDLHTTEHGYTEVYVPYVVNAESMRGTGQLPKFEEDLFHVPRSDADRLYLIPTAEVPVTNLVRDEIVAAEALPLKFVAHTPCFRSEAGSYGRDTRGMIRQHQFDKVELVQMVRPEDSYAALEGLAAHAETVLQRLGLPYRKMALCSGDMGFSAAKTYDLEVWLPAQNTYREISSCSNFEAFQARRMQARFREGQGKPELLHTLNGSGLAVGRTLVAILENYQNADGSITVPEALRPWMGGVERLTPA.

Residue 233–235 coordinates L-serine; that stretch reads TAE. 264–266 provides a ligand contact to ATP; the sequence is RSE. Glu287 lines the L-serine pocket. 351 to 354 contacts ATP; it reads EISS. L-serine is bound at residue Ser386.

The protein belongs to the class-II aminoacyl-tRNA synthetase family. Type-1 seryl-tRNA synthetase subfamily. In terms of assembly, homodimer. The tRNA molecule binds across the dimer.

Its subcellular location is the cytoplasm. The enzyme catalyses tRNA(Ser) + L-serine + ATP = L-seryl-tRNA(Ser) + AMP + diphosphate + H(+). It catalyses the reaction tRNA(Sec) + L-serine + ATP = L-seryl-tRNA(Sec) + AMP + diphosphate + H(+). Its pathway is aminoacyl-tRNA biosynthesis; selenocysteinyl-tRNA(Sec) biosynthesis; L-seryl-tRNA(Sec) from L-serine and tRNA(Sec): step 1/1. Its function is as follows. Catalyzes the attachment of serine to tRNA(Ser). Is also able to aminoacylate tRNA(Sec) with serine, to form the misacylated tRNA L-seryl-tRNA(Sec), which will be further converted into selenocysteinyl-tRNA(Sec). This is Serine--tRNA ligase from Thiobacillus denitrificans (strain ATCC 25259 / T1).